The sequence spans 162 residues: Ribosome maturation factor RimM (162 aa).

The 75-residue stretch at 86-160 (EGRYYYFALI…SIHVDPIPGL (75 aa)) folds into the PRC barrel domain.

The protein belongs to the RimM family. In terms of assembly, binds ribosomal protein uS19.

The protein resides in the cytoplasm. Its function is as follows. An accessory protein needed during the final step in the assembly of 30S ribosomal subunit, possibly for assembly of the head region. Essential for efficient processing of 16S rRNA. May be needed both before and after RbfA during the maturation of 16S rRNA. It has affinity for free ribosomal 30S subunits but not for 70S ribosomes. The polypeptide is Ribosome maturation factor RimM (Thermus thermophilus (strain ATCC 27634 / DSM 579 / HB8)).